Consider the following 142-residue polypeptide: UPF0305 protein MK0666 (142 aa).

Belongs to the UPF0305 family.

This Methanopyrus kandleri (strain AV19 / DSM 6324 / JCM 9639 / NBRC 100938) protein is UPF0305 protein MK0666.